The chain runs to 620 residues: Glutathione-regulated potassium-efflux system protein KefC (620 aa).

The next 12 membrane-spanning stretches (helical) occupy residues 4-24 (HTLM…PIAV), 26-46 (LGLG…PWGL), 54-74 (SILH…GLEL), 90-110 (GALQ…FLGL), 114-134 (VAEL…MQAM), 149-169 (FAVL…IPLL), 178-198 (LGAF…VVLL), 218-238 (VFSA…EEVG), 270-290 (GLLL…GTLV), 294-314 (LRIL…LWLI), 327-347 (WFAV…GAAQ), and 359-379 (ALTL…VLLT). Positions 399 to 518 (QPRVIVAGFG…AGVAMPERET (120 aa)) constitute an RCK N-terminal domain. The tract at residues 599 to 620 (QGTAEGKHTGDIADEPQVKPST) is disordered.

The protein belongs to the monovalent cation:proton antiporter 2 (CPA2) transporter (TC 2.A.37) family. KefC subfamily. Homodimer. Interacts with the regulatory subunit KefF.

It localises to the cell inner membrane. Pore-forming subunit of a potassium efflux system that confers protection against electrophiles. Catalyzes K(+)/H(+) antiport. This Salmonella arizonae (strain ATCC BAA-731 / CDC346-86 / RSK2980) protein is Glutathione-regulated potassium-efflux system protein KefC.